The chain runs to 156 residues: SsrA-binding protein (156 aa).

Residues 130 to 156 (KFDKRDDLKKKDAKRDIDRALRDKQKY) form a disordered region. The segment covering 132–156 (DKRDDLKKKDAKRDIDRALRDKQKY) has biased composition (basic and acidic residues).

The protein belongs to the SmpB family.

It localises to the cytoplasm. Its function is as follows. Required for rescue of stalled ribosomes mediated by trans-translation. Binds to transfer-messenger RNA (tmRNA), required for stable association of tmRNA with ribosomes. tmRNA and SmpB together mimic tRNA shape, replacing the anticodon stem-loop with SmpB. tmRNA is encoded by the ssrA gene; the 2 termini fold to resemble tRNA(Ala) and it encodes a 'tag peptide', a short internal open reading frame. During trans-translation Ala-aminoacylated tmRNA acts like a tRNA, entering the A-site of stalled ribosomes, displacing the stalled mRNA. The ribosome then switches to translate the ORF on the tmRNA; the nascent peptide is terminated with the 'tag peptide' encoded by the tmRNA and targeted for degradation. The ribosome is freed to recommence translation, which seems to be the essential function of trans-translation. The polypeptide is SsrA-binding protein (Exiguobacterium sibiricum (strain DSM 17290 / CCUG 55495 / CIP 109462 / JCM 13490 / 255-15)).